The following is a 216-amino-acid chain: Adenylate kinase (216 aa).

10–15 (GAGKGT) is a binding site for ATP. Positions 30-59 (STGDMFRAAMKAETEMGLQAKSFIDKGALV) are NMP. Residues Thr-31, Arg-36, 57-59 (ALV), 85-88 (GFPR), and Gln-92 each bind AMP. The LID stretch occupies residues 126 to 163 (GRRICKECGATYHLEFNPPAKADVCDKCGGELYQRSDD). Arg-127 is an ATP binding site. Zn(2+) contacts are provided by Cys-130 and Cys-133. Residue 136 to 137 (TY) participates in ATP binding. Cys-150 and Cys-153 together coordinate Zn(2+). AMP contacts are provided by Arg-160 and Arg-171. Gln-199 provides a ligand contact to ATP.

The protein belongs to the adenylate kinase family. As to quaternary structure, monomer.

The protein resides in the cytoplasm. It carries out the reaction AMP + ATP = 2 ADP. It functions in the pathway purine metabolism; AMP biosynthesis via salvage pathway; AMP from ADP: step 1/1. Functionally, catalyzes the reversible transfer of the terminal phosphate group between ATP and AMP. Plays an important role in cellular energy homeostasis and in adenine nucleotide metabolism. The chain is Adenylate kinase from Bacillus cereus (strain B4264).